The primary structure comprises 254 residues: Alcohol dehydrogenase 1 (254 aa).

NAD(+) is bound at residue 10–33 (FVAGLGGIGFDTSREIVKSGPKNL). Residue serine 138 participates in substrate binding. The active-site Proton acceptor is tyrosine 151.

This sequence belongs to the short-chain dehydrogenases/reductases (SDR) family. As to quaternary structure, homodimer.

The enzyme catalyses a primary alcohol + NAD(+) = an aldehyde + NADH + H(+). It catalyses the reaction a secondary alcohol + NAD(+) = a ketone + NADH + H(+). The sequence is that of Alcohol dehydrogenase 1 (Adh1) from Drosophila mulleri (Fruit fly).